The sequence spans 477 residues: MQVLHVCSEMFPLLKTGGLADVIGALPAAQIAEGIDTRVLLPAFPDIRRGVVDAQVVTRRDTFAGRITLLYGHFNGVGIYLIDAPHLYDRPGSPYHDTNQHAYTDNVLRFALLGWVGSEMASGLDPFWRPDVVHAHDWHAGLTPAYLAARGRPAKSVFTVHNLAYQGMFYSWHMNDIELPWSFYNMHGLEFNGQISFLKAGLYYADHITAVSPTYAREITEPQYAYGMEGLLRQRHHEGRLSGILNGVDDGIWSPQNDLLLPMRYDRDTLEEKAENKRQLQIAMGLKVDDKAPLFAVVSRLTSQKGLDLVLEALPGLLEQGGQLALLGAGDPVLQEGFLAAAAEHPGKVGVQIGYHEAFSHRIMGGADVILVPSRFEPCGLTQLYGLKYGTLPLVRRTGGLADTVSDSSLENLADGLATGFVFEDSNALSLLRAIRRAFVLWSRPSLWRYVQRQAMNMDFSWQVAANSYRELYQRLM.

K15 serves as a coordination point for ADP-alpha-D-glucose.

The protein belongs to the glycosyltransferase 1 family. Bacterial/plant glycogen synthase subfamily.

It catalyses the reaction [(1-&gt;4)-alpha-D-glucosyl](n) + ADP-alpha-D-glucose = [(1-&gt;4)-alpha-D-glucosyl](n+1) + ADP + H(+). It functions in the pathway glycan biosynthesis; glycogen biosynthesis. In terms of biological role, synthesizes alpha-1,4-glucan chains using ADP-glucose. This Klebsiella pneumoniae (strain 342) protein is Glycogen synthase.